Reading from the N-terminus, the 468-residue chain is MTKTLPKDFIFGGATAAYQAEGATHTDGKGPVAWDKYLEDNYWYTAEPASDFYNRYPVDLKLSEEFGVNGIRISIAWSRIFPTGKGDVNPKGVEYYHNLFAECHKRHVEPFVTLHHFDTPEALHSDGDFLNRENIEHFVNYAEFCFKEFSEVNYWTTFNEIGPIGDGQYLVGKFPPGIQYDLAKVFQSHHNMMVSHARAVKLFKDGGYSGEIGVVHALPTKYPFDANNPDDVRAAELEDIIHNKFILDATYLGKYSDKTMEGVNHILEVNGGELDLREEDFVALDAAKDLNDFLGINYYMSDWMQAFDGETEIIHNGKGEKGSSKYQIKGVGRRKAPVDVPKTDWDWIIFPQGLYDQIMRVKADYPNYKKIYITENGLGYKDEFVDNTVYDDGRIDYVKKHLEVISDAISDGANVKGYFMWSLMDVFSWSNGYEKLYGLFYVDFETQERYPKKSAYWYKKVAETQVIE.

Residues Gln19, His116, Asn159, Glu160, and Asn297 each contribute to the D-galactose 6-phosphate site. The Proton donor role is filled by Glu160. Glu375 functions as the Nucleophile in the catalytic mechanism. D-galactose 6-phosphate-binding residues include Ser428, Trp429, Lys435, and Tyr437.

Belongs to the glycosyl hydrolase 1 family.

It carries out the reaction a 6-phospho-beta-D-galactoside + H2O = D-galactose 6-phosphate + an alcohol. It functions in the pathway carbohydrate metabolism; lactose degradation; D-galactose 6-phosphate and beta-D-glucose from lactose 6-phosphate: step 1/1. The protein is 6-phospho-beta-galactosidase of Streptococcus pyogenes serotype M4 (strain MGAS10750).